Consider the following 238-residue polypeptide: Probable transcriptional regulatory protein SSU05_0402 (238 aa).

Belongs to the TACO1 family. YeeN subfamily.

The protein resides in the cytoplasm. The polypeptide is Probable transcriptional regulatory protein SSU05_0402 (Streptococcus suis (strain 05ZYH33)).